A 100-amino-acid chain; its full sequence is Small ribosomal subunit protein uS14c (100 aa).

This sequence belongs to the universal ribosomal protein uS14 family. In terms of assembly, part of the 30S ribosomal subunit.

It localises to the plastid. The protein resides in the chloroplast. Functionally, binds 16S rRNA, required for the assembly of 30S particles. This Chaetosphaeridium globosum (Charophycean green alga) protein is Small ribosomal subunit protein uS14c.